We begin with the raw amino-acid sequence, 553 residues long: HTH-type transcriptional regulator SgrR (553 aa).

The 117-residue stretch at 1–117 (MSTARLQQQF…LSQLGRSFRQ (117 aa)) folds into the HTH marR-type domain. The H-T-H motif DNA-binding region spans 26–49 (LQELAEVLCCSRRHVRSLLGSMQQ). The tract at residues 163-494 (ELEPDLSHHW…EELHQDVELW (332 aa)) is solute-binding.

Its function is as follows. Activates the small RNA gene sgrS under glucose-phosphate stress conditions as well as yfdZ. Represses its own transcription under both stress and non-stress conditions. Might act as a sensor of the intracellular accumulation of phosphoglucose by binding these molecules in its C-terminal solute-binding domain. The chain is HTH-type transcriptional regulator SgrR from Yersinia enterocolitica serotype O:8 / biotype 1B (strain NCTC 13174 / 8081).